Here is a 625-residue protein sequence, read N- to C-terminus: TORTIFOLIA1-like protein 4 (625 aa).

The segment at 1-34 (MSVHGRFPASPPISLSPSSSSTSPSSQSPSTPPD) is disordered. A compositionally biased stretch (low complexity) spans 12 to 29 (PISLSPSSSSTSPSSQSP). HEAT repeat units lie at residues 69–106 (DSFS…YHGD), 110–147 (PHLA…HVTR), 149–186 (PFAS…AATD), 190–227 (EQLR…AGGA), and 230–268 (KPVL…AEDL). A disordered region spans residues 391-466 (SVDNKGPHFT…VKNCKDDVEE (76 aa)). Composition is skewed to basic and acidic residues over residues 404 to 413 (KSSEETEEKA), 420 to 434 (IIKH…EDSK), and 455 to 466 (DSVKNCKDDVEE). At Ser-475 the chain carries Phosphoserine. Residues 582 to 625 (GMRESTDTNNGQRGGSVFQKRSRRDQFQDCMHTTLQKPTTRLST) form a disordered region. Positions 612-625 (MHTTLQKPTTRLST) are enriched in polar residues.

In Arabidopsis thaliana (Mouse-ear cress), this protein is TORTIFOLIA1-like protein 4.